The following is a 126-amino-acid chain: Fluoride-specific ion channel FluC (126 aa).

4 consecutive transmembrane segments (helical) span residues 4 to 24, 36 to 56, 68 to 88, and 99 to 119; these read SILA…FLGL, GTLA…ALFA, LIIT…AEVV, and AFAA…AGIA. Residues glycine 75 and threonine 78 each contribute to the Na(+) site.

The protein belongs to the fluoride channel Fluc/FEX (TC 1.A.43) family.

It is found in the cell inner membrane. The catalysed reaction is fluoride(in) = fluoride(out). With respect to regulation, na(+) is not transported, but it plays an essential structural role and its presence is essential for fluoride channel function. Fluoride-specific ion channel. Important for reducing fluoride concentration in the cell, thus reducing its toxicity. This is Fluoride-specific ion channel FluC from Chromobacterium violaceum (strain ATCC 12472 / DSM 30191 / JCM 1249 / CCUG 213 / NBRC 12614 / NCIMB 9131 / NCTC 9757 / MK).